The primary structure comprises 437 residues: Glutamyl-tRNA reductase (437 aa).

Residues 49–52, S109, 114–116, and Q120 contribute to the substrate site; these read TCNR and ETQ. C50 functions as the Nucleophile in the catalytic mechanism. An NADP(+)-binding site is contributed by 189-194; it reads GAGKMS.

Belongs to the glutamyl-tRNA reductase family. As to quaternary structure, homodimer.

It carries out the reaction (S)-4-amino-5-oxopentanoate + tRNA(Glu) + NADP(+) = L-glutamyl-tRNA(Glu) + NADPH + H(+). The protein operates within porphyrin-containing compound metabolism; protoporphyrin-IX biosynthesis; 5-aminolevulinate from L-glutamyl-tRNA(Glu): step 1/2. Catalyzes the NADPH-dependent reduction of glutamyl-tRNA(Glu) to glutamate 1-semialdehyde (GSA). This Paenibacillus macerans (Bacillus macerans) protein is Glutamyl-tRNA reductase.